The primary structure comprises 345 residues: Holliday junction branch migration complex subunit RuvB (345 aa).

Residues 1–182 are large ATPase domain (RuvB-L); the sequence is MQRLVEVESV…FGMHFRMQFY (182 aa). ATP is bound by residues Leu-21, Arg-22, Gly-63, Lys-66, Thr-67, Thr-68, 129–131, Arg-172, Tyr-182, and Arg-219; that span reads EDY. Thr-67 serves as a coordination point for Mg(2+). The segment at 183–253 is small ATPAse domain (RuvB-S); it reads TEIELAKIIQ…RCKYALDELG (71 aa). The tract at residues 256-345 is head domain (RuvB-H); the sequence is ESGFDEMDIN…EDDLTQGKLF (90 aa). Residues Arg-310 and Arg-315 each coordinate DNA.

Belongs to the RuvB family. As to quaternary structure, homohexamer. Forms an RuvA(8)-RuvB(12)-Holliday junction (HJ) complex. HJ DNA is sandwiched between 2 RuvA tetramers; dsDNA enters through RuvA and exits via RuvB. An RuvB hexamer assembles on each DNA strand where it exits the tetramer. Each RuvB hexamer is contacted by two RuvA subunits (via domain III) on 2 adjacent RuvB subunits; this complex drives branch migration. In the full resolvosome a probable DNA-RuvA(4)-RuvB(12)-RuvC(2) complex forms which resolves the HJ.

The protein resides in the cytoplasm. The catalysed reaction is ATP + H2O = ADP + phosphate + H(+). In terms of biological role, the RuvA-RuvB-RuvC complex processes Holliday junction (HJ) DNA during genetic recombination and DNA repair, while the RuvA-RuvB complex plays an important role in the rescue of blocked DNA replication forks via replication fork reversal (RFR). RuvA specifically binds to HJ cruciform DNA, conferring on it an open structure. The RuvB hexamer acts as an ATP-dependent pump, pulling dsDNA into and through the RuvAB complex. RuvB forms 2 homohexamers on either side of HJ DNA bound by 1 or 2 RuvA tetramers; 4 subunits per hexamer contact DNA at a time. Coordinated motions by a converter formed by DNA-disengaged RuvB subunits stimulates ATP hydrolysis and nucleotide exchange. Immobilization of the converter enables RuvB to convert the ATP-contained energy into a lever motion, pulling 2 nucleotides of DNA out of the RuvA tetramer per ATP hydrolyzed, thus driving DNA branch migration. The RuvB motors rotate together with the DNA substrate, which together with the progressing nucleotide cycle form the mechanistic basis for DNA recombination by continuous HJ branch migration. Branch migration allows RuvC to scan DNA until it finds its consensus sequence, where it cleaves and resolves cruciform DNA. This Aliarcobacter butzleri (strain RM4018) (Arcobacter butzleri) protein is Holliday junction branch migration complex subunit RuvB.